Reading from the N-terminus, the 563-residue chain is Adenine deaminase (563 aa).

This sequence belongs to the metallo-dependent hydrolases superfamily. Adenine deaminase family. Requires Mn(2+) as cofactor.

The enzyme catalyses adenine + H2O + H(+) = hypoxanthine + NH4(+). In Lactiplantibacillus plantarum (strain ATCC BAA-793 / NCIMB 8826 / WCFS1) (Lactobacillus plantarum), this protein is Adenine deaminase.